The chain runs to 268 residues: Undecaprenyl-diphosphatase (268 aa).

The next 7 membrane-spanning stretches (helical) occupy residues 43–63, 83–103, 109–129, 144–164, 184–204, 218–238, and 246–266; these read FWNT…VVIY, FVIG…IAGK, LFNP…LMWV, FPLP…IPGV, AAEF…AYDF, IVAI…KAFL, and FTFF…ALAL.

Belongs to the UppP family.

The protein resides in the cell inner membrane. The catalysed reaction is di-trans,octa-cis-undecaprenyl diphosphate + H2O = di-trans,octa-cis-undecaprenyl phosphate + phosphate + H(+). Its function is as follows. Catalyzes the dephosphorylation of undecaprenyl diphosphate (UPP). Confers resistance to bacitracin. This chain is Undecaprenyl-diphosphatase, found in Nitrobacter hamburgensis (strain DSM 10229 / NCIMB 13809 / X14).